An 808-amino-acid chain; its full sequence is MNIDDKLEGMLLKYSPVGLQHPSRGLGPSRVDGRGRRGSLDMTLGERSLANHPLLAEDDDDEDEEEDDDDDLAGEGLTSHDLISQDDLMVHEETVKNDGQDEAAFSHRISNKLHYTLSMPVNIKQEMKVPDSLILNKKEKKPGRDPSDCHKKKKRKQRSPAKILTINEDGSLGHQNPKSHICEHCNAAFRTNYHLQRHVFIHTGEKPFQCNQCDMRFIQKYLLQRHEKIHTGEKPFRCDECGMKFIQKYHMERHKRTHSGEKPYQCDYCHQFFSRTDRVLKHRRMCHENKDRKVQKTAVKDSPLRTPENLGFSFPAKDCTLPKKKRQKTSDKSRASITNPAVDKVVEADMDEKTEDRLAKSECLPLYAVATKVKDEYVVTDYSVELPDSPPGSRHLAGEESNDEIISPPKLVLKKIASRRGFKQQALEQSQSLSPLSSFEESKVTRYTFEIVDNKGLLDVETNPDMESVEALQVGQAKPTGSSTNYDDAMQFVKKRRYLQAATANTSRDYALNVSSIVSQSSVTQASVATVIDETVPATILSETQTLNVEIKSSNEKNVLPDEVLQTLLDHYSNKANGQAEISFSVADTEVTSSISINSSDESSPAEALVTSSQAPPTEKASLLQEYSKFLQQALERTSQNDTYLNNQSLTFVNDSASLAGQPLFSTEKQFTSPPRFRPTMNSPLRSTLEKPNFNLLVDTQHSFSFSGDETNPSSVSPTEDFLDQVTSPKKTDPQSISQTFQITTFDQNFRSQFPSSRSGISPQFSIASGQVTLRGHGGADFPEFSLVNETRTQLTSSPDATSSQTFG.

2 disordered regions span residues 15–86 and 131–162; these read SPVG…ISQD and DSLILNKKEKKPGRDPSDCHKKKKRKQRSPAK. The segment covering 56–73 has biased composition (acidic residues); it reads AEDDDDEDEEEDDDDDLA. The span at 150–159 shows a compositional bias: basic residues; the sequence is HKKKKRKQRS. 4 consecutive C2H2-type zinc fingers follow at residues 180-202, 208-230, 236-258, and 264-287; these read HICEHCNAAFRTNYHLQRHVFIH, FQCNQCDMRFIQKYLLQRHEKIH, FRCDECGMKFIQKYHMERHKRTH, and YQCDYCHQFFSRTDRVLKHRRMCH. Disordered stretches follow at residues 305-338, 596-617, and 705-736; these read RTPENLGFSFPAKDCTLPKKKRQKTSDKSRASIT, SINSSDESSPAEALVTSSQAPP, and SFSGDETNPSSVSPTEDFLDQVTSPKKTDPQS. 2 stretches are compositionally biased toward polar residues: residues 705–718 and 725–736; these read SFSGDETNPSSVSP and QVTSPKKTDPQS.

This sequence belongs to the krueppel C2H2-type zinc-finger protein family.

The protein localises to the nucleus. In terms of biological role, involved in transcriptional regulation. Represses the transcription of a number of genes. Required for primitive and definitive hematopoiesis during embryonic development. The sequence is that of Zinc finger protein 148 (znf148) from Danio rerio (Zebrafish).